A 377-amino-acid polypeptide reads, in one-letter code: Histidinol-phosphate aminotransferase (377 aa).

K232 bears the N6-(pyridoxal phosphate)lysine mark.

This sequence belongs to the class-II pyridoxal-phosphate-dependent aminotransferase family. Histidinol-phosphate aminotransferase subfamily. As to quaternary structure, homodimer. It depends on pyridoxal 5'-phosphate as a cofactor.

It catalyses the reaction L-histidinol phosphate + 2-oxoglutarate = 3-(imidazol-4-yl)-2-oxopropyl phosphate + L-glutamate. Its pathway is amino-acid biosynthesis; L-histidine biosynthesis; L-histidine from 5-phospho-alpha-D-ribose 1-diphosphate: step 7/9. The sequence is that of Histidinol-phosphate aminotransferase from Mycobacterium sp. (strain KMS).